Here is a 342-residue protein sequence, read N- to C-terminus: Fatty acid desaturase 6 (342 aa).

A run of 2 helical transmembrane segments spans residues 39 to 59 (GVDC…FLCL) and 63 to 83 (NILA…TLTV). Positions 87–91 (HLATH) match the Histidine box-1 motif. The chain crosses the membrane as a helical span at residues 100–120 (WSKILMIFFLEVCTAFSAEFA). The Histidine box-2 motif lies at 124 to 128 (HVNLH). The next 2 membrane-spanning stretches (helical) occupy residues 151-171 (YVYM…VALE) and 185-205 (LGFI…VSGF). A Histidine box-3 motif is present at residues 277–281 (HVEHH).

The protein belongs to the fatty acid desaturase type 1 family.

The protein resides in the membrane. The protein operates within lipid metabolism; fatty acid metabolism. In Mus musculus (Mouse), this protein is Fatty acid desaturase 6 (Fads6).